The chain runs to 154 residues: 6,7-dimethyl-8-ribityllumazine synthase (154 aa).

Residues Phe-22, 56–58 (AFE), and 80–82 (AVI) each bind 5-amino-6-(D-ribitylamino)uracil. 85–86 (AT) is a (2S)-2-hydroxy-3-oxobutyl phosphate binding site. His-88 functions as the Proton donor in the catalytic mechanism. Residue Phe-113 participates in 5-amino-6-(D-ribitylamino)uracil binding. A (2S)-2-hydroxy-3-oxobutyl phosphate-binding site is contributed by Arg-127.

Belongs to the DMRL synthase family.

The enzyme catalyses (2S)-2-hydroxy-3-oxobutyl phosphate + 5-amino-6-(D-ribitylamino)uracil = 6,7-dimethyl-8-(1-D-ribityl)lumazine + phosphate + 2 H2O + H(+). It participates in cofactor biosynthesis; riboflavin biosynthesis; riboflavin from 2-hydroxy-3-oxobutyl phosphate and 5-amino-6-(D-ribitylamino)uracil: step 1/2. Its function is as follows. Catalyzes the formation of 6,7-dimethyl-8-ribityllumazine by condensation of 5-amino-6-(D-ribitylamino)uracil with 3,4-dihydroxy-2-butanone 4-phosphate. This is the penultimate step in the biosynthesis of riboflavin. The sequence is that of 6,7-dimethyl-8-ribityllumazine synthase from Syntrophobacter fumaroxidans (strain DSM 10017 / MPOB).